Reading from the N-terminus, the 99-residue chain is MLGMIRWVVEGTLVAMLLSAIRRETGMIFFYNQYQLGGWIHRYLSWGEMCYTRTLKMVKRSKFFRKQLNEDGFGRINDSGPKRRGRDQSQYSSRFVELD.

Residues 1-19 (MLGMIRWVVEGTLVAMLLS) form the signal peptide. The disordered stretch occupies residues 71 to 99 (DGFGRINDSGPKRRGRDQSQYSSRFVELD).

It localises to the cytoplasm. This is an uncharacterized protein from Saccharomyces cerevisiae (strain ATCC 204508 / S288c) (Baker's yeast).